The chain runs to 452 residues: Enolase (452 aa).

Q167 contacts (2R)-2-phosphoglycerate. Catalysis depends on E209, which acts as the Proton donor. Positions 250, 307, and 334 each coordinate Mg(2+). (2R)-2-phosphoglycerate contacts are provided by K359, R388, S389, and K410. K359 acts as the Proton acceptor in catalysis.

The protein belongs to the enolase family. Mg(2+) serves as cofactor.

The protein localises to the cytoplasm. Its subcellular location is the secreted. It is found in the cell surface. The enzyme catalyses (2R)-2-phosphoglycerate = phosphoenolpyruvate + H2O. It participates in carbohydrate degradation; glycolysis; pyruvate from D-glyceraldehyde 3-phosphate: step 4/5. Functionally, catalyzes the reversible conversion of 2-phosphoglycerate (2-PG) into phosphoenolpyruvate (PEP). It is essential for the degradation of carbohydrates via glycolysis. This is Enolase from Mesomycoplasma hyopneumoniae (strain 7448) (Mycoplasma hyopneumoniae).